The following is a 230-amino-acid chain: Large ribosomal subunit protein uL1 (230 aa).

This sequence belongs to the universal ribosomal protein uL1 family. In terms of assembly, part of the 50S ribosomal subunit.

Its function is as follows. Binds directly to 23S rRNA. The L1 stalk is quite mobile in the ribosome, and is involved in E site tRNA release. Functionally, protein L1 is also a translational repressor protein, it controls the translation of the L11 operon by binding to its mRNA. This Staphylococcus aureus (strain Mu3 / ATCC 700698) protein is Large ribosomal subunit protein uL1.